The chain runs to 668 residues: MKHYSIQPANLEFNAEGTPVSRDFDDVYFSNDNGLEETRYVFLGGNQLEVRFPEHPHPLFVVAESGFGTGLNFLTLWQAFDQFREAHPQAQLQRLHFISFEKFPLTRADLALAHQHWPELAPWAEQLQAQWPMPLPGCHRLLLDEGRVTLDLWFGDINELTSQQDDSLNQKVDAWFLDGFAPAKNPDMWTQNLFNAMARLARPGGTLATFTSAGFVRRGLQDAGFTMQKRKGFGRKREMLCGVMEQTLPLPCSAPWFNRTGSSKREAAIIGGGIACALLSLALLRRGWQVTLYCADEAPALGASGNRQGALYPLLSKHDEALNRFFSNAFTFARRFYDQLPVKFDHDWCGVTQLGWDEKSQHKIAQMLSMDLPAELAVAVEANAVEQITGVATNCSGITYPQGGWLCPAELTRNVLELAQQQGLQIYYQYQLQNLSRKDDCWLLNFAGDQQATHSVVVLANGHQISRFSQTSTLPVYSVAGQVSHIPTTPELAELKQVLCYDGYLTPQNPANQHHCIGASYHRGSEDTAYSEDDQQQNRQRLIDCFPQAQWAKEVDVSDKEARCGVRCATRDHLPMVGNVPDYEATLVEYASLAEQKDEAVSAPVFDDLFMFAALGSRGLCSAPLCAEILAAQMSDEPIPMDASTLAALNPNRLWVRKLLKGKAVKAG.

The tract at residues 1–245 (MKHYSIQPAN…KREMLCGVME (245 aa)) is tRNA (mnm(5)s(2)U34)-methyltransferase. Residues 270-668 (IGGGIACALL…LLKGKAVKAG (399 aa)) are FAD-dependent cmnm(5)s(2)U34 oxidoreductase.

This sequence in the N-terminal section; belongs to the methyltransferase superfamily. tRNA (mnm(5)s(2)U34)-methyltransferase family. The protein in the C-terminal section; belongs to the DAO family. It depends on FAD as a cofactor.

The protein localises to the cytoplasm. The enzyme catalyses 5-aminomethyl-2-thiouridine(34) in tRNA + S-adenosyl-L-methionine = 5-methylaminomethyl-2-thiouridine(34) in tRNA + S-adenosyl-L-homocysteine + H(+). Catalyzes the last two steps in the biosynthesis of 5-methylaminomethyl-2-thiouridine (mnm(5)s(2)U) at the wobble position (U34) in tRNA. Catalyzes the FAD-dependent demodification of cmnm(5)s(2)U34 to nm(5)s(2)U34, followed by the transfer of a methyl group from S-adenosyl-L-methionine to nm(5)s(2)U34, to form mnm(5)s(2)U34. The polypeptide is tRNA 5-methylaminomethyl-2-thiouridine biosynthesis bifunctional protein MnmC (Shigella boydii serotype 4 (strain Sb227)).